A 54-amino-acid polypeptide reads, in one-letter code: Small, acid-soluble spore protein gamma-type (54 aa).

The interval 1 to 54 is disordered; it reads MAKKNRNKQQQEMQQQQQQHQAEFANEFAEGSSAEQARQQQQKAAGKRQKKNQQ. 2 stretches are compositionally biased toward low complexity: residues 10 to 21 and 29 to 44; these read QQEMQQQQQQHQ and AEGS…QQKA. Over residues 45-54 the composition is skewed to basic residues; it reads AGKRQKKNQQ.

The protein belongs to the gamma-type SASP family.

Functionally, SASP are proteins degraded in the first minutes of spore germination and provide amino acids for both new protein synthesis and metabolism. These proteins may be involved in dormant spore's high resistance to UV light. The polypeptide is Small, acid-soluble spore protein gamma-type (sspA) (Alkalihalophilus pseudofirmus (strain ATCC BAA-2126 / JCM 17055 / OF4) (Bacillus pseudofirmus)).